A 647-amino-acid polypeptide reads, in one-letter code: LIM domain kinase 1 (647 aa).

LIM zinc-binding domains lie at 25 to 75 and 84 to 137; these read CASC…CKKD and CHGC…CGQC. Positions 165 to 258 constitute a PDZ domain; the sequence is LVSIPASAHG…LLQLTLEHDP (94 aa). Phosphoserine is present on Ser-210. Residue Thr-229 is modified to Phosphothreonine. The segment at 256 to 316 is disordered; it reads HDPHDSLGHG…SLVSPASQRK (61 aa). The span at 278 to 289 shows a compositional bias: polar residues; it reads HTPSGQAGSSAR. Phosphoserine is present on residues Ser-298, Ser-302, Ser-307, and Ser-310. Ser-323 is modified (phosphoserine; by MAPKAPK2). A Phosphoserine modification is found at Ser-337. Residues 339–604 form the Protein kinase domain; the sequence is LIHGEVLGKG…PSFVKLEQWL (266 aa). ATP is bound by residues 345 to 353 and Lys-368; that span reads LGKGCFGQA. Asp-460 is a catalytic residue. Phosphothreonine; by ROCK1 and PAK1 is present on Thr-508.

It belongs to the protein kinase superfamily. TKL Ser/Thr protein kinase family. As to quaternary structure, interacts (via LIM domain) with the cytoplasmic domain of NRG1. Interacts with NISCH. Interacts with RLIM and RNF6. Self-associates to form homodimers. Interacts with HSP90AA1; this interaction promotes LIMK1 dimerization and subsequent transphosphorylation. Interacts with CDKN1C. Interacts with SSH1. Interacts with ROCK1. Interacts (via LIM zinc-binding domains) with FAM89B/LRAP25 (via LRR repeat). Forms a tripartite complex with CDC42BPA, CDC42BPB and FAM89B/LRAP25. Post-translationally, autophosphorylated. Phosphorylated on Thr-508 by ROCK1 and PAK1, resulting in activation. Phosphorylated by PAK4 which increases the ability of LIMK1 to phosphorylate cofilin. Phosphorylated at Ser-323 by MAPKAPK2 during activation of VEGFA-induced signaling, which results in activation of LIMK1 and promotion of actin reorganization, cell migration, and tubule formation of endothelial cells. Dephosphorylated and inactivated by SSH1. Phosphorylated by CDC42BP. Ubiquitinated. 'Lys-48'-linked polyubiquitination by RNF6 leads to proteasomal degradation through the 26S proteasome, modulating LIMK1 levels in the growth cone and its effect on axonal outgrowth. Also polyubiquitinated by RLIM.

The protein localises to the cytoplasm. It localises to the nucleus. The protein resides in the cytoskeleton. It is found in the cell projection. Its subcellular location is the lamellipodium. The catalysed reaction is L-seryl-[protein] + ATP = O-phospho-L-seryl-[protein] + ADP + H(+). It carries out the reaction L-threonyl-[protein] + ATP = O-phospho-L-threonyl-[protein] + ADP + H(+). Serine/threonine-protein kinase that plays an essential role in the regulation of actin filament dynamics. Acts downstream of several Rho family GTPase signal transduction pathways. Activated by upstream kinases including ROCK1, PAK1 and PAK4, which phosphorylate LIMK1 on a threonine residue located in its activation loop. LIMK1 subsequently phosphorylates and inactivates the actin binding/depolymerizing factors cofilin-1/CFL1, cofilin-2/CFL2 and destrin/DSTN, thereby preventing the cleavage of filamentous actin (F-actin), and stabilizing the actin cytoskeleton. In this way LIMK1 regulates several actin-dependent biological processes including cell motility, cell cycle progression, and differentiation. Phosphorylates TPPP on serine residues, thereby promoting microtubule disassembly. Stimulates axonal outgrowth and may be involved in brain development. This Rattus norvegicus (Rat) protein is LIM domain kinase 1 (Limk1).